Consider the following 831-residue polypeptide: DNA ligase (831 aa).

NAD(+) contacts are provided by residues 34–38 (DADYD), 83–84 (SL), and E114. K116 serves as the catalytic N6-AMP-lysine intermediate. Residues R137, E174, K291, and K315 each coordinate NAD(+). Positions 409, 412, 427, and 433 each coordinate Zn(2+). Residues 749 to 831 (AHTAPLNGQS…LDFLEQYSAQ (83 aa)) form the BRCT domain.

Belongs to the NAD-dependent DNA ligase family. LigA subfamily. The cofactor is Mg(2+). It depends on Mn(2+) as a cofactor.

It catalyses the reaction NAD(+) + (deoxyribonucleotide)n-3'-hydroxyl + 5'-phospho-(deoxyribonucleotide)m = (deoxyribonucleotide)n+m + AMP + beta-nicotinamide D-nucleotide.. In terms of biological role, DNA ligase that catalyzes the formation of phosphodiester linkages between 5'-phosphoryl and 3'-hydroxyl groups in double-stranded DNA using NAD as a coenzyme and as the energy source for the reaction. It is essential for DNA replication and repair of damaged DNA. This Xylella fastidiosa (strain M12) protein is DNA ligase.